The sequence spans 357 residues: Phosphoserine aminotransferase (357 aa).

Arg41 contacts L-glutamate. Pyridoxal 5'-phosphate contacts are provided by residues 75–76, Trp100, Thr150, Asp170, and Gln193; that span reads GT. N6-(pyridoxal phosphate)lysine is present on Lys194. 234–235 contacts pyridoxal 5'-phosphate; the sequence is NT.

This sequence belongs to the class-V pyridoxal-phosphate-dependent aminotransferase family. SerC subfamily. As to quaternary structure, homodimer. Requires pyridoxal 5'-phosphate as cofactor.

It is found in the cytoplasm. The enzyme catalyses O-phospho-L-serine + 2-oxoglutarate = 3-phosphooxypyruvate + L-glutamate. It carries out the reaction 4-(phosphooxy)-L-threonine + 2-oxoglutarate = (R)-3-hydroxy-2-oxo-4-phosphooxybutanoate + L-glutamate. The protein operates within amino-acid biosynthesis; L-serine biosynthesis; L-serine from 3-phospho-D-glycerate: step 2/3. Catalyzes the reversible conversion of 3-phosphohydroxypyruvate to phosphoserine and of 3-hydroxy-2-oxo-4-phosphonooxybutanoate to phosphohydroxythreonine. The chain is Phosphoserine aminotransferase from Lactiplantibacillus plantarum (strain ATCC BAA-793 / NCIMB 8826 / WCFS1) (Lactobacillus plantarum).